The primary structure comprises 351 residues: Glycerol-3-phosphate dehydrogenase [NAD(P)+] (351 aa).

Ser-12, Trp-13, His-33, and Lys-114 together coordinate NADPH. Residues Lys-114, Gly-145, and Ser-147 each coordinate sn-glycerol 3-phosphate. Ala-149 is an NADPH binding site. The sn-glycerol 3-phosphate site is built by Lys-200, Asp-253, Ser-263, Arg-264, and Asn-265. Lys-200 (proton acceptor) is an active-site residue. Arg-264 contributes to the NADPH binding site. The NADPH site is built by Val-288 and Glu-290.

It belongs to the NAD-dependent glycerol-3-phosphate dehydrogenase family.

The protein resides in the cytoplasm. It catalyses the reaction sn-glycerol 3-phosphate + NAD(+) = dihydroxyacetone phosphate + NADH + H(+). The catalysed reaction is sn-glycerol 3-phosphate + NADP(+) = dihydroxyacetone phosphate + NADPH + H(+). It functions in the pathway membrane lipid metabolism; glycerophospholipid metabolism. Functionally, catalyzes the reduction of the glycolytic intermediate dihydroxyacetone phosphate (DHAP) to sn-glycerol 3-phosphate (G3P), the key precursor for phospholipid synthesis. This Lacticaseibacillus paracasei (strain ATCC 334 / BCRC 17002 / CCUG 31169 / CIP 107868 / KCTC 3260 / NRRL B-441) (Lactobacillus paracasei) protein is Glycerol-3-phosphate dehydrogenase [NAD(P)+].